The chain runs to 56 residues: uncharacterized protein (56 aa).

A helical membrane pass occupies residues 30-52 (IKIGIICVIITWAIFSINHHHTI).

It localises to the membrane. This is an uncharacterized protein from Dictyostelium discoideum (Social amoeba).